The chain runs to 173 residues: MAEKRNIFLIGPMGAGKSTIGRQLAQMLGMEFIDSDAVIEERAGADIDWIFDLEGETGFRKREERIINELTQNQGVVLSTGGGSVLSKENRNVLSARGIVIYLETTVDKQFERTQRDKKRPLLQTENPRETLEALAKVRNPLYEEIADITLQTDEQSAKLVATHIIELIDNLQ.

Residue 14–19 coordinates ATP; the sequence is GAGKST. Residue Ser-18 participates in Mg(2+) binding. Asp-36, Arg-60, and Gly-82 together coordinate substrate. Arg-120 lines the ATP pocket. Arg-139 provides a ligand contact to substrate. Gln-156 serves as a coordination point for ATP.

This sequence belongs to the shikimate kinase family. In terms of assembly, monomer. It depends on Mg(2+) as a cofactor.

It is found in the cytoplasm. It catalyses the reaction shikimate + ATP = 3-phosphoshikimate + ADP + H(+). The protein operates within metabolic intermediate biosynthesis; chorismate biosynthesis; chorismate from D-erythrose 4-phosphate and phosphoenolpyruvate: step 5/7. Its function is as follows. Catalyzes the specific phosphorylation of the 3-hydroxyl group of shikimic acid using ATP as a cosubstrate. The chain is Shikimate kinase from Actinobacillus pleuropneumoniae serotype 5b (strain L20).